We begin with the raw amino-acid sequence, 837 residues long: Vacuolar membrane protease (837 aa).

Over methionine 1–lysine 36 the chain is Cytoplasmic. A helical transmembrane segment spans residues threonine 37–aspartate 57. Residues asparagine 58 to arginine 355 are Vacuolar-facing. A glycan (N-linked (GlcNAc...) asparagine) is linked at asparagine 143. Histidine 157 and aspartate 169 together coordinate Zn(2+). Glutamate 201 (proton acceptor) is an active-site residue. Residues glutamate 202, glutamate 227, and histidine 299 each coordinate Zn(2+). The helical transmembrane segment at valine 356–valine 376 threads the bilayer. The Cytoplasmic segment spans residues lysine 377 to arginine 384. The chain crosses the membrane as a helical span at residues valine 385 to glycine 405. Residues asparagine 406–methionine 415 lie on the Vacuolar side of the membrane. A helical membrane pass occupies residues methionine 416–valine 436. Topologically, residues aspartate 437–lysine 446 are cytoplasmic. A helical transmembrane segment spans residues leucine 447 to serine 467. Residues glycine 468–glutamate 474 are Vacuolar-facing. A helical transmembrane segment spans residues phenylalanine 475 to tryptophan 495. The Cytoplasmic portion of the chain corresponds to threonine 496–leucine 539. A helical membrane pass occupies residues leucine 540 to valine 560. Asparagine 561 carries N-linked (GlcNAc...) asparagine glycosylation. The Vacuolar segment spans residues asparagine 561–histidine 572. A helical transmembrane segment spans residues leucine 573–isoleucine 593. The Cytoplasmic segment spans residues threonine 594–arginine 598. Residues tyrosine 599–histidine 619 form a helical membrane-spanning segment. Topologically, residues proline 620 to valine 837 are vacuolar. N-linked (GlcNAc...) asparagine glycosylation is present at asparagine 689.

It belongs to the peptidase M28 family. The cofactor is Zn(2+).

The protein resides in the vacuole membrane. Its function is as follows. May be involved in vacuolar sorting and osmoregulation. The chain is Vacuolar membrane protease from Candida albicans (strain SC5314 / ATCC MYA-2876) (Yeast).